A 494-amino-acid chain; its full sequence is Glutamyl-tRNA(Gln) amidotransferase subunit A (494 aa).

Residues Lys78 and Ser158 each act as charge relay system in the active site. The active-site Acyl-ester intermediate is the Ser182.

The protein belongs to the amidase family. GatA subfamily. Heterotrimer of A, B and C subunits.

It carries out the reaction L-glutamyl-tRNA(Gln) + L-glutamine + ATP + H2O = L-glutaminyl-tRNA(Gln) + L-glutamate + ADP + phosphate + H(+). Functionally, allows the formation of correctly charged Gln-tRNA(Gln) through the transamidation of misacylated Glu-tRNA(Gln) in organisms which lack glutaminyl-tRNA synthetase. The reaction takes place in the presence of glutamine and ATP through an activated gamma-phospho-Glu-tRNA(Gln). This chain is Glutamyl-tRNA(Gln) amidotransferase subunit A, found in Jannaschia sp. (strain CCS1).